The chain runs to 166 residues: Small ribosomal subunit protein uS4 (166 aa).

Residues 102–164 (RRLQTIVWRK…HPSCLEVEKE (63 aa)) enclose the S4 RNA-binding domain.

Belongs to the universal ribosomal protein uS4 family. As to quaternary structure, part of the 30S ribosomal subunit. Contacts protein S5. The interaction surface between S4 and S5 is involved in control of translational fidelity.

One of the primary rRNA binding proteins, it binds directly to 16S rRNA where it nucleates assembly of the body of the 30S subunit. Functionally, with S5 and S12 plays an important role in translational accuracy. The chain is Small ribosomal subunit protein uS4 from Korarchaeum cryptofilum (strain OPF8).